A 244-amino-acid polypeptide reads, in one-letter code: DNA repair protein RecO (244 aa).

This sequence belongs to the RecO family.

Involved in DNA repair and RecF pathway recombination. This is DNA repair protein RecO from Nocardioides sp. (strain ATCC BAA-499 / JS614).